A 167-amino-acid chain; its full sequence is NADPH-dependent 7-cyano-7-deazaguanine reductase (167 aa).

Positions 1-24 are disordered; the sequence is MTTRSQDQTRDLKVLGTGRLTSPE. Cys57 functions as the Thioimide intermediate in the catalytic mechanism. Catalysis depends on Asp64, which acts as the Proton donor. Substrate is bound by residues 79 to 81 and 98 to 99; these read VES and ME.

It belongs to the GTP cyclohydrolase I family. QueF type 1 subfamily.

Its subcellular location is the cytoplasm. The catalysed reaction is 7-aminomethyl-7-carbaguanine + 2 NADP(+) = 7-cyano-7-deazaguanine + 2 NADPH + 3 H(+). It participates in tRNA modification; tRNA-queuosine biosynthesis. Functionally, catalyzes the NADPH-dependent reduction of 7-cyano-7-deazaguanine (preQ0) to 7-aminomethyl-7-deazaguanine (preQ1). This Desulfovibrio desulfuricans (strain ATCC 27774 / DSM 6949 / MB) protein is NADPH-dependent 7-cyano-7-deazaguanine reductase.